Reading from the N-terminus, the 291-residue chain is Secreted effector protein PipB (291 aa).

Pentapeptide repeat domains lie at 154 to 193 and 199 to 238; these read LNLRGVNLAHKDFQGEDLSKIDASNADFRETTLSNVNLVG and ANLHAVNLMGSNMTKANLTHADLTCANMSGVNLTAAILFG.

Its subcellular location is the secreted. The protein localises to the host membrane. Functionally, effector proteins function to alter host cell physiology and promote bacterial survival in host tissues. Does not appear to be required for the formation or the maintenance of either Salmonella-containing vacuole (SCV) or the Salmonella-induced filaments (Sifs). Not required for intracellular replication in phagocytic cells. This is Secreted effector protein PipB (pipB) from Salmonella typhimurium (strain LT2 / SGSC1412 / ATCC 700720).